Reading from the N-terminus, the 369-residue chain is MGSSLSLCYPSDKTFNINGVKYTVNRILGEGGFSFVYLVKDNSNSKKYALKVMICQTQESINTAKREINAFQTFNHENIMKLIDHSISNHSQDTKEYRLLLPYYKDGTLQDLIDNQRTIYGKDTKKPLFKEKKCLQFFLKVCEAIQVFHNHSPPLAHRDIKPGNIVLQNLRRPSNNNNNNNNNNNNNNNNNNNNNNNNNNNNNNNNNNNNNNNNNNNNNNNSEDSDIEAIPILMDFGSVREARIKIENRKDALSLQDEVEQNTTPFYRAPELFDIPSDCQIDERIDVWALGCLLYTMAYNNSPFEVCDNEPNGSVALKVLSGLPKPFPPSQTNYSNQFNQLIIDMVNLDKDERLHLNQVIERINQIIQS.

In terms of domain architecture, Protein kinase spans 22-367; that stretch reads YTVNRILGEG…QVIERINQII (346 aa). ATP-binding positions include 28–36 and K51; that span reads LGEGGFSFV. D159 acts as the Proton acceptor in catalysis. The segment at 169–225 is disordered; sequence NLRRPSNNNNNNNNNNNNNNNNNNNNNNNNNNNNNNNNNNNNNNNNNNNNNNNSEDS. The segment covering 175–221 has biased composition (low complexity); the sequence is NNNNNNNNNNNNNNNNNNNNNNNNNNNNNNNNNNNNNNNNNNNNNNN.

The protein belongs to the protein kinase superfamily. Ser/Thr protein kinase family.

The catalysed reaction is L-seryl-[protein] + ATP = O-phospho-L-seryl-[protein] + ADP + H(+). It carries out the reaction L-threonyl-[protein] + ATP = O-phospho-L-threonyl-[protein] + ADP + H(+). The sequence is that of Probable serine/threonine-protein kinase DDB_G0291350 from Dictyostelium discoideum (Social amoeba).